The chain runs to 201 residues: Lipoprotein signal peptidase (201 aa).

Helical transmembrane passes span 73 to 93 and 97 to 117; these read SNAI…YLMI and TIGS…NLID. Catalysis depends on residues D126 and D144. Residues 135-155 traverse the membrane as a helical segment; sequence YSFPVFNLADCFITIGVIILI.

It belongs to the peptidase A8 family.

The protein resides in the cell inner membrane. The catalysed reaction is Release of signal peptides from bacterial membrane prolipoproteins. Hydrolyzes -Xaa-Yaa-Zaa-|-(S,diacylglyceryl)Cys-, in which Xaa is hydrophobic (preferably Leu), and Yaa (Ala or Ser) and Zaa (Gly or Ala) have small, neutral side chains.. The protein operates within protein modification; lipoprotein biosynthesis (signal peptide cleavage). In terms of biological role, this protein specifically catalyzes the removal of signal peptides from prolipoproteins. The chain is Lipoprotein signal peptidase from Rickettsia africae (strain ESF-5).